The following is a 229-amino-acid chain: Triosephosphate isomerase (229 aa).

9–11 (NLK) contributes to the substrate binding site. Catalysis depends on His93, which acts as the Electrophile. Glu141 serves as the catalytic Proton acceptor. Substrate contacts are provided by residues Ile146, Gly181, and 202–203 (AS).

This sequence belongs to the triosephosphate isomerase family. Homotetramer; dimer of dimers.

Its subcellular location is the cytoplasm. It catalyses the reaction D-glyceraldehyde 3-phosphate = dihydroxyacetone phosphate. The protein operates within carbohydrate biosynthesis; gluconeogenesis. It functions in the pathway carbohydrate degradation; glycolysis; D-glyceraldehyde 3-phosphate from glycerone phosphate: step 1/1. Its function is as follows. Involved in the gluconeogenesis. Catalyzes stereospecifically the conversion of dihydroxyacetone phosphate (DHAP) to D-glyceraldehyde-3-phosphate (G3P). The sequence is that of Triosephosphate isomerase from Pyrobaculum islandicum (strain DSM 4184 / JCM 9189 / GEO3).